Here is a 114-residue protein sequence, read N- to C-terminus: Vesicle-associated membrane protein 2 (114 aa).

Over residues 1–11 (MSAPAAGPPAA) the composition is skewed to pro residues. The interval 1 to 31 (MSAPAAGPPAAAPGDGAPQGPPNLTSNRRLQ) is disordered. Residue serine 2 is modified to N-acetylserine. Residues 2–92 (SAPAAGPPAA…KRKYWWKNMK (91 aa)) lie on the Cytoplasmic side of the membrane. Positions 29 to 89 (RLQQTQAQVD…AKLKRKYWWK (61 aa)) constitute a v-SNARE coiled-coil homology domain. The chain crosses the membrane as a helical; Anchor for type IV membrane protein span at residues 93-111 (MMIIMGVICAIILIIIIVY). Residues 112-114 (FST) lie on the Vesicular side of the membrane.

This sequence belongs to the synaptobrevin family.

It is found in the cytoplasmic vesicle. Its subcellular location is the secretory vesicle. It localises to the synaptic vesicle membrane. The protein localises to the cell membrane. In terms of biological role, involved in the targeting and/or fusion of transport vesicles to their target membrane. Major SNARE protein of synaptic vesicles which mediates fusion of synaptic vesicles to release neurotransmitters. Essential for fast vesicular exocytosis and activity-dependent neurotransmitter release as well as fast endocytosis that mediates rapid reuse of synaptic vesicles. In Xenopus laevis (African clawed frog), this protein is Vesicle-associated membrane protein 2 (vamp2).